Consider the following 357-residue polypeptide: MKQETTVLVGISGGVDSAVAACMLVDEGYRVIGLNIKVLDSPESNPALQPSSLVISNREEFRIPVYTLNLSKRFREDVIGYFQEEYLAARTPNPCIVCNKKIKWAGLLEAADMLNADLVATGHYASTAFLGGRCRLYQGADKKKDQSYFLWMLQQKELLKTILPLGTLAKPEVRELARSYGVPAAEKKESQEICFVPGDDYCRYLEQAIPDLAERVRGGELVDASGRVIGHHRGYPFYTIGQRRGLGASTGEPIYVTSIDPVHNRIHTGKKTDLLSRELTASGMNWIGIEPPKKPFEATARIRYRDAPTPCRVTPLEDNRATISFHSPKSAITRGQAAVIYRDDEVLGGGSIVETTQ.

ATP is bound by residues 10–17 (GISGGVDS) and isoleucine 36. Cysteine 98 acts as the Nucleophile in catalysis. The cysteines at positions 98 and 194 are disulfide-linked. ATP is bound at residue glycine 122. Residues 144-146 (KDQ) form an interaction with tRNA region. Catalysis depends on cysteine 194, which acts as the Cysteine persulfide intermediate. Residues 303-304 (RY) form an interaction with tRNA region.

Belongs to the MnmA/TRMU family.

It localises to the cytoplasm. The enzyme catalyses S-sulfanyl-L-cysteinyl-[protein] + uridine(34) in tRNA + AH2 + ATP = 2-thiouridine(34) in tRNA + L-cysteinyl-[protein] + A + AMP + diphosphate + H(+). In terms of biological role, catalyzes the 2-thiolation of uridine at the wobble position (U34) of tRNA, leading to the formation of s(2)U34. The sequence is that of tRNA-specific 2-thiouridylase MnmA from Chlorobium phaeovibrioides (strain DSM 265 / 1930) (Prosthecochloris vibrioformis (strain DSM 265)).